The primary structure comprises 1219 residues: Cullin-associated NEDD8-dissociated protein 1 (1219 aa).

N-acetylalanine is present on A2. HEAT repeat units follow at residues 44–81 (DLEVRLSSIILQQLDDVAGDVSGLAVKCLAPLVKKVGE), 83–119 (RIVEMTNKLCDKLLHGKDQHRDTASIALRTVVAQIAP), 209–244 (KATVEVVKNLSNRNAKSEITRTNIQMIGALCRAVGY), 248–288 (THLG…RCPR), 327–363 (EEDDESANEYTDDEDASWKVRRAAAKCLAGLIVSRSE), 367–404 (KVYQEACPKLIDRFKEREENVKMDVFNTFIDLLRQTGN), 423–460 (QEVSKIVKSINRQLREKSVKTKVGAFSVLRELVVVLPD), 464–503 (DHIGSLVPGIERALNDKSSTSNLKIEALVFTKLVLASHAP), 599–636 (AELPSCLPVLVDRMGNEITRLTAVKAFSVIATSPLHIN), 639–676 (CVLDHLIAELTGFLRKANRVLRQATLITMNTLVTAYGD), 808–848 (KNCS…RKDL), 850–883 (AHAGIETIVIESFQSPFEEIKSAASYALGNIAVG), 927–964 (SSVEKILALLFNHCESEEEGVRNVVAECLGKMALIEPE), 966–998 (LVPALQVRTTSPAAFTRATVVTAVKYSVVERPE), 1002–1039 (EIIFPQISSFLMLIKDGDRHVRRAAVSALSTFAHYKPN), 1043–1079 (GLLPELLPLLYDQTVIKKELIRTVDLGPFKHVVDDGL), 1101–1137 (NPSSFIVPFLKSGLEDHYDLKMLCHLILSLLADKCPS), and 1141–1180 (AVLDSLVEPLHKTISFKPKQDAVKQEHDRNEDMIRSALRA). Residues 311-340 (FTDNMEEDTDNETLEDEEDDESANEYTDDE) are disordered. Acidic residues predominate over residues 314 to 340 (NMEEDTDNETLEDEEDDESANEYTDDE).

Belongs to the CAND family. In terms of assembly, interacts with CUL1 and CUL4. Binds unneddylated CUL1, but cannot bind CUL1 once it has been neddylated. Highly expressed in roots. Expressed in stems, flowers and siliques.

In terms of biological role, key assembly factor of SCF (SKP1-CUL1-F-box protein) E3 ubiquitin ligase complexes that promotes the exchange of the substrate-recognition F-box subunit in SCF complexes, thereby playing a key role in the cellular repertoire of SCF complexes. Acts as a F-box protein exchange factor. Required for SCF(TIR1) function. Modulates SCF(TIR1) function through its interactions with the CUL1 subunit. Represses photomorphogenesis by promoting HY5 degradation in darkness. The protein is Cullin-associated NEDD8-dissociated protein 1 (CAND1) of Arabidopsis thaliana (Mouse-ear cress).